Reading from the N-terminus, the 85-residue chain is Sec-independent protein translocase protein TatA (85 aa).

The helical transmembrane segment at 1–21 (MGIFDWKHWLIILIVVVLVFG) threads the bilayer. Positions 43–85 (VNTEEGENRPAEPQTGTSAGDTLNKTQTIEGQAQKVDTPVRKD) are disordered. Positions 56 to 73 (QTGTSAGDTLNKTQTIEG) are enriched in polar residues.

The protein belongs to the TatA/E family. As to quaternary structure, the Tat system comprises two distinct complexes: a TatABC complex, containing multiple copies of TatA, TatB and TatC subunits, and a separate TatA complex, containing only TatA subunits. Substrates initially bind to the TatABC complex, which probably triggers association of the separate TatA complex to form the active translocon.

Its subcellular location is the cell inner membrane. Its function is as follows. Part of the twin-arginine translocation (Tat) system that transports large folded proteins containing a characteristic twin-arginine motif in their signal peptide across membranes. TatA could form the protein-conducting channel of the Tat system. This is Sec-independent protein translocase protein TatA from Azotobacter vinelandii (strain DJ / ATCC BAA-1303).